The sequence spans 441 residues: EP1-like glycoprotein 3 (441 aa).

Residues 1 to 22 form the signal peptide; the sequence is MKFSITLALCFTLSIFLIGSQA. A Bulb-type lectin domain is found at 29–159; the sequence is QFRVVNEGGY…SGKFVWQSFD (131 aa). Residues N102, N258, and N269 are each glycosylated (N-linked (GlcNAc...) asparagine). The WD repeat unit spans residues 254–296; sequence GSKFNVSTFLSRPKHNATLSFIRLESDGNIRVWSYSTLATSTA. The region spanning 356 to 433 is the PAN domain; that stretch reads CDPKTFHYFK…SSLVAYVKAP (78 aa). 2 cysteine pairs are disulfide-bonded: C387–C409 and C391–C397.

Phosphorylated on tyrosine.

The protein resides in the secreted. Its subcellular location is the cell wall. May be involved in a cell-to cell programmed cell death (PCD) signaling mechanism. This Arabidopsis thaliana (Mouse-ear cress) protein is EP1-like glycoprotein 3.